Consider the following 464-residue polypeptide: Asparagine--tRNA ligase (464 aa).

This sequence belongs to the class-II aminoacyl-tRNA synthetase family. Homodimer.

It localises to the cytoplasm. The catalysed reaction is tRNA(Asn) + L-asparagine + ATP = L-asparaginyl-tRNA(Asn) + AMP + diphosphate + H(+). The sequence is that of Asparagine--tRNA ligase from Xanthomonas euvesicatoria pv. vesicatoria (strain 85-10) (Xanthomonas campestris pv. vesicatoria).